A 469-amino-acid polypeptide reads, in one-letter code: Ribosomal protein uS12 methylthiotransferase RimO (469 aa).

Residues 34–144 form the MTTase N-terminal domain; sequence NKIGFVSLGC…VLEHVHQFAP (111 aa). Residues C43, C79, C108, C176, C180, and C183 each contribute to the [4Fe-4S] cluster site. In terms of domain architecture, Radical SAM core spans 162-399; sequence LTPKHYAYLK…MLVQQEISAA (238 aa). The 67-residue stretch at 402–468 folds into the TRAM domain; that stretch reads QKRIGSTMKV…EYDLWGSLVR (67 aa).

The protein belongs to the methylthiotransferase family. RimO subfamily. [4Fe-4S] cluster is required as a cofactor.

It is found in the cytoplasm. It carries out the reaction L-aspartate(89)-[ribosomal protein uS12]-hydrogen + (sulfur carrier)-SH + AH2 + 2 S-adenosyl-L-methionine = 3-methylsulfanyl-L-aspartate(89)-[ribosomal protein uS12]-hydrogen + (sulfur carrier)-H + 5'-deoxyadenosine + L-methionine + A + S-adenosyl-L-homocysteine + 2 H(+). In terms of biological role, catalyzes the methylthiolation of an aspartic acid residue of ribosomal protein uS12. This Vibrio vulnificus (strain YJ016) protein is Ribosomal protein uS12 methylthiotransferase RimO.